We begin with the raw amino-acid sequence, 1105 residues long: Carbamoyl phosphate synthase large chain (1105 aa).

Residues 1 to 402 are carboxyphosphate synthetic domain; it reads MPKRDDIEKV…ALGKAVRSLE (402 aa). Residues Arg129, Arg169, Gly175, Gly176, Lys208, Val210, Glu215, Gly241, Ile242, His243, Gln285, and Glu299 each coordinate ATP. An ATP-grasp 1 domain is found at 133-328; it reads KTAMKNCGLE…IAKISALLAV (196 aa). Gln285, Glu299, and Asn301 together coordinate Mg(2+). Residues Gln285, Glu299, and Asn301 each contribute to the Mn(2+) site. The tract at residues 403-542 is oligomerization domain; the sequence is LDIAPKLDLR…STYNGMENET (140 aa). The segment at 543-945 is carbamoyl phosphate synthetic domain; the sequence is IPSKRRKIMV…AFAKAQLSAD (403 aa). The ATP-grasp 2 domain maps to 667 to 858; the sequence is AKFLKQSGLS…VAKIAAKTII (192 aa). ATP contacts are provided by Arg703, Lys742, Leu744, Glu749, Gly774, Ile775, His776, Ser777, Gln817, and Glu829. Mg(2+) is bound by residues Gln817, Glu829, and Asn831. 3 residues coordinate Mn(2+): Gln817, Glu829, and Asn831. One can recognise an MGS-like domain in the interval 940-1101; the sequence is AQLSADGIST…QDIFYAQQNT (162 aa). An allosteric domain region spans residues 946-1105; the sequence is GISTKSLLVT…YAQQNTLLKK (160 aa).

This sequence belongs to the CarB family. As to quaternary structure, composed of two chains; the small (or glutamine) chain promotes the hydrolysis of glutamine to ammonia, which is used by the large (or ammonia) chain to synthesize carbamoyl phosphate. Tetramer of heterodimers (alpha,beta)4. Mg(2+) serves as cofactor. Mn(2+) is required as a cofactor.

The catalysed reaction is hydrogencarbonate + L-glutamine + 2 ATP + H2O = carbamoyl phosphate + L-glutamate + 2 ADP + phosphate + 2 H(+). The enzyme catalyses hydrogencarbonate + NH4(+) + 2 ATP = carbamoyl phosphate + 2 ADP + phosphate + 2 H(+). The protein operates within amino-acid biosynthesis; L-arginine biosynthesis; carbamoyl phosphate from bicarbonate: step 1/1. It functions in the pathway pyrimidine metabolism; UMP biosynthesis via de novo pathway; (S)-dihydroorotate from bicarbonate: step 1/3. Its function is as follows. Large subunit of the glutamine-dependent carbamoyl phosphate synthetase (CPSase). CPSase catalyzes the formation of carbamoyl phosphate from the ammonia moiety of glutamine, carbonate, and phosphate donated by ATP, constituting the first step of 2 biosynthetic pathways, one leading to arginine and/or urea and the other to pyrimidine nucleotides. The large subunit (synthetase) binds the substrates ammonia (free or transferred from glutamine from the small subunit), hydrogencarbonate and ATP and carries out an ATP-coupled ligase reaction, activating hydrogencarbonate by forming carboxy phosphate which reacts with ammonia to form carbamoyl phosphate. This is Carbamoyl phosphate synthase large chain from Pseudothermotoga lettingae (strain ATCC BAA-301 / DSM 14385 / NBRC 107922 / TMO) (Thermotoga lettingae).